The primary structure comprises 457 residues: tRNA-2-methylthio-N(6)-dimethylallyladenosine synthase (457 aa).

In terms of domain architecture, MTTase N-terminal spans 2–119; it reads KKVFIKTFGC…LPELIDARRR (118 aa). [4Fe-4S] cluster contacts are provided by Cys-11, Cys-48, Cys-82, Cys-156, Cys-160, and Cys-163. The Radical SAM core domain occupies 142-375; that stretch reads RVEGPSAFVS…QATIDANMAR (234 aa). The 71-residue stretch at 378–448 folds into the TRAM domain; sequence EGMVGSVQRI…PHSLRGDVVE (71 aa).

It belongs to the methylthiotransferase family. MiaB subfamily. In terms of assembly, monomer. It depends on [4Fe-4S] cluster as a cofactor.

It is found in the cytoplasm. The catalysed reaction is N(6)-dimethylallyladenosine(37) in tRNA + (sulfur carrier)-SH + AH2 + 2 S-adenosyl-L-methionine = 2-methylsulfanyl-N(6)-dimethylallyladenosine(37) in tRNA + (sulfur carrier)-H + 5'-deoxyadenosine + L-methionine + A + S-adenosyl-L-homocysteine + 2 H(+). Functionally, catalyzes the methylthiolation of N6-(dimethylallyl)adenosine (i(6)A), leading to the formation of 2-methylthio-N6-(dimethylallyl)adenosine (ms(2)i(6)A) at position 37 in tRNAs that read codons beginning with uridine. In Ralstonia nicotianae (strain ATCC BAA-1114 / GMI1000) (Ralstonia solanacearum), this protein is tRNA-2-methylthio-N(6)-dimethylallyladenosine synthase.